The chain runs to 149 residues: Protegrin-3 (149 aa).

Positions 1-29 (METQRASLCLGRWSLWLLLLALVVPSASA) are cleaved as a signal peptide. The propeptide occupies 30–130 (QALSYREAVL…DITCNEVQGV (101 aa)). A disordered region spans residues 61–80 (DQPPKADEDPGTPKPVSFTV). 4 disulfides stabilise this stretch: cysteine 85–cysteine 96, cysteine 107–cysteine 124, cysteine 136–cysteine 145, and cysteine 138–cysteine 143. At arginine 148 the chain carries Arginine amide.

This sequence belongs to the cathelicidin family.

Its subcellular location is the secreted. Its function is as follows. Microbicidal activity. Active against E.coli, Listeria monocytogenes and C.albicans, in vitro. This chain is Protegrin-3 (NPG3), found in Sus scrofa (Pig).